We begin with the raw amino-acid sequence, 189 residues long: Leucine repeat adapter protein 25 (189 aa).

Serine 28 is subject to Phosphoserine. Residues 54–83 form a disordered region; the sequence is ELSRAARAPDGPRHAAGAANAGPAAGPRRP. Positions 67–83 are enriched in low complexity; sequence HAAGAANAGPAAGPRRP. Residues 86–114 form an LRR repeat; sequence LDSALAALRKEMVGLRQLDMSLLCQLWGL. The disordered stretch occupies residues 141-175; sequence DSSYPPDAGLSDDEEPPDASLPPDPPPLTVPQTHN. The span at 159–169 shows a compositional bias: pro residues; it reads ASLPPDPPPLT. At serine 188 the chain carries Phosphoserine.

This sequence belongs to the FAM89 family. Interacts with SKI. Interacts (via LRR repeat) with CDC42BPA (via AGC-kinase C-terminal domain), CDC42BPB (via AGC-kinase C-terminal domain) and LIMK1 (via LIM zinc-binding domains). Forms a tripartite complex with CDC42BPA, CDC42BPB and LIMK1.

The protein localises to the cytoplasm. The protein resides in the cell projection. It is found in the lamellipodium. Its function is as follows. Negatively regulates TGF-beta-induced signaling; in cooperation with SKI prevents the translocation of SMAD2 from the nucleus to the cytoplasm in response to TGF-beta. Acts as an adapter that mediates the specific recognition of LIMK1 by CDC42BPA and CDC42BPB in the lamellipodia. LRAP25-mediated CDC42BPA/CDC42BPB targeting to LIMK1 and the lamellipodium results in LIMK1 activation and the subsequent phosphorylation of CFL1 which is important for lamellipodial F-actin regulation. This chain is Leucine repeat adapter protein 25 (FAM89B), found in Homo sapiens (Human).